Here is a 362-residue protein sequence, read N- to C-terminus: MAHHDPIGLIAPNAGLAQLNERSRDIFRQIVESYLATGEPVGSRNISRLIAVPLSPASVRNVMSDLEQLGLIYAPHTSAGRLPTELGLRFFVDALMQVGDLTEPERQSIQSQLASVGKAQSVEAALEEALTRLSGLTRTAAVVLTAKSNVRLKHIEFVRLEPDKALVVLVAEDGQVENRVLTLPSGVPASALTEASNFLNARIRGRTLAEARLELETALAQSKAELDQLTQKIVAAGIASWSGGDSDDRQLIVRGHANLLEDLHAMEDLERVRLLFDDLETKREVIDLLGRAERADGVRIFIGSENKLFSLSGSSTIIAPYSDGAGHIVGVLGVIGPTRLNYARVIPMVDYAARIVSQMLGR.

Belongs to the HrcA family.

Negative regulator of class I heat shock genes (grpE-dnaK-dnaJ and groELS operons). Prevents heat-shock induction of these operons. The chain is Heat-inducible transcription repressor HrcA from Nitrobacter winogradskyi (strain ATCC 25391 / DSM 10237 / CIP 104748 / NCIMB 11846 / Nb-255).